A 91-amino-acid polypeptide reads, in one-letter code: Ixochymostatin (91 aa).

An N-terminal signal peptide occupies residues 1–20 (MKTYVLQALLLTLAVAVVRA). 5 cysteine pairs are disulfide-bonded: cysteine 34/cysteine 70, cysteine 43/cysteine 66, cysteine 48/cysteine 62, cysteine 53/cysteine 90, and cysteine 72/cysteine 84. A TIL domain is found at 34 to 90 (CAEGETWKECVGSSCAELTCEHPEPSLGCTYDCNYGCYCAPDFFRNANKECVKKDKC).

It belongs to the serine protease inhibitor-like (TIL domain-containing) family. As to expression, salivary gland. Midgut.

It is found in the secreted. Its function is as follows. Tight-binding competitive inhibitor of chymotrypsin-like proteases; inhibits host chymase, cathepsin G (CTSG) and chymotrypsin. Inhibits chymase-mediated generation of vasoconstrictor peptides: angiotensin II and endothelin I. Reduces chymase-mediated vascular permeability and vascular endothelial-cadherin degradation. This Ixodes scapularis (Black-legged tick) protein is Ixochymostatin.